We begin with the raw amino-acid sequence, 674 residues long: Death-associated protein kinase related (674 aa).

The 259-residue stretch at 37–295 (EVEQTPFARG…ATGCLDHIWL (259 aa)) folds into the Protein kinase domain. ATP is bound by residues 43-51 (FARGKFAAV) and Lys-66. Asp-160 functions as the Proton acceptor in the catalytic mechanism. Disordered regions lie at residues 308–388 (QPQS…GGSI), 412–440 (TLTSNSNGHVHKPTQIVTPTRRASDSDKE), 511–583 (DSSG…TSGS), and 614–650 (TSSASSSNSSSGKSTSAAHHLHHHHMHHHHHHHHHHV). Acidic residues predominate over residues 312–343 (DAEEEEEEDVDDDVEDEEEEEQVEEEEEETQN). Residues 352–363 (PQQQQQPVQQHQ) are compositionally biased toward low complexity. Residues 373 to 382 (KPTHNGHHRA) are compositionally biased toward basic residues. 5 positions are modified to phosphoserine: Ser-384, Ser-387, Ser-435, Ser-437, and Ser-521. Residues 512 to 525 (SSGSAVARRSGGAV) show a composition bias toward low complexity. 2 stretches are compositionally biased toward polar residues: residues 526-541 (TSSSGLHSPTTTSVRL) and 555-564 (YKKQTSQNGC). Composition is skewed to low complexity over residues 565–583 (SSTSNPSSSPGSSPTTSGS) and 614–631 (TSSASSSNSSSGKSTSAA). Over residues 632-650 (HHLHHHHMHHHHHHHHHHV) the composition is skewed to basic residues.

Belongs to the protein kinase superfamily. Ser/Thr protein kinase family.

It carries out the reaction L-seryl-[protein] + ATP = O-phospho-L-seryl-[protein] + ADP + H(+). It catalyses the reaction L-threonyl-[protein] + ATP = O-phospho-L-threonyl-[protein] + ADP + H(+). The polypeptide is Death-associated protein kinase related (Drak) (Drosophila melanogaster (Fruit fly)).